A 452-amino-acid chain; its full sequence is Protein MLF3 (452 aa).

6 positions are modified to phosphoserine: Ser8, Ser11, Ser14, Ser56, Ser74, and Ser79. The interval 61–94 (SGSEVRTPSLRKNSNNVSSPLDNVIPTSRSASNS) is disordered. Positions 64–81 (EVRTPSLRKNSNNVSSPL) are enriched in polar residues. Thr121 bears the Phosphothreonine mark. 3 positions are modified to phosphoserine: Ser145, Ser156, and Ser160. Position 169 is a phosphothreonine (Thr169). Position 171 is a phosphoserine (Ser171). Positions 171–182 (SATLPSSESSPA) are enriched in polar residues. The tract at residues 171-220 (SATLPSSESSPASPDLKLSRSHSHSAATRPTLNNINNTGMTTTTSNGEPN) is disordered. Thr173 is modified (phosphothreonine). 2 positions are modified to phosphoserine: Ser183 and Ser189. Positions 201–216 (TLNNINNTGMTTTTSN) are enriched in low complexity. Tyr227 bears the Phosphotyrosine mark. A phosphoserine mark is found at Ser228, Ser257, and Ser265. Disordered stretches follow at residues 290–321 (PATSPYVSPQQSARQYSNNANNNAKSPKNRSS) and 348–402 (IESS…AIGK). At Tyr295 the chain carries Phosphotyrosine. A phosphoserine mark is found at Ser297, Ser320, and Ser353. Residues 299–321 (QQSARQYSNNANNNAKSPKNRSS) show a composition bias toward low complexity. A compositionally biased stretch (low complexity) spans 365 to 383 (PSFPLSSSLRSSANLASNP). Over residues 384–398 (ELATQTPLSTSSSYT) the composition is skewed to polar residues. Ser439 carries the post-translational modification Phosphoserine.

To yeast VHS2.

It localises to the cytoplasm. This Saccharomyces cerevisiae (strain ATCC 204508 / S288c) (Baker's yeast) protein is Protein MLF3 (MLF3).